An 852-amino-acid polypeptide reads, in one-letter code: Thrombospondin type-1 domain-containing protein 1 (852 aa).

Positions 1-24 (MKPMLKDFSNLLLVVLCDYVLGEA) are cleaved as a signal peptide. At 25-413 (EYLLLREPGH…QPQGPVKSNN (389 aa)) the chain is on the extracellular side. N-linked (GlcNAc...) asparagine glycosylation is found at N39, N53, N58, N69, N80, N135, and N304. The region spanning 340-393 (TETWGLWQPWSQCSATCGDGVRERRRVCLTSFPSSPVCPGMSLEASLCSLEECA) is the TSP type-1 domain. Intrachain disulfides connect C352–C387, C356–C392, and C367–C377. Residues 414-434 (IVTVTGISLCLFIIIATVLIT) form a helical membrane-spanning segment. Residues 435–852 (LWRRFGRPAK…STLSVEKLVI (418 aa)) lie on the Cytoplasmic side of the membrane. 2 disordered regions span residues 444–517 (KCST…ESFQ) and 624–799 (LIRK…RKDK). S463 carries the post-translational modification Phosphoserine. The span at 645-654 (ARNAHFRRTA) shows a compositional bias: basic residues. Over residues 655–669 (SFHEARQARPFRERS) the composition is skewed to basic and acidic residues. Polar residues predominate over residues 670 to 685 (MSTLTPRQAPAYSSRT). Over residues 686–696 (RTCEQAEDRFR) the composition is skewed to basic and acidic residues. Polar residues-rich tracts occupy residues 766 to 778 (SHKS…SSPI) and 785 to 794 (QRVSSLSPSQ).

Part of a complex composed of THSD1, PTK2/FAK1, TLN1 and VCL. Interacts with TLN1.

The protein resides in the endosome membrane. Its subcellular location is the cell junction. It localises to the focal adhesion. The protein localises to the membrane. It is found in the secreted. Its function is as follows. Is a positive regulator of nascent focal adhesion assembly, involved in the modulation of endothelial cell attachment to the extracellular matrix. In Homo sapiens (Human), this protein is Thrombospondin type-1 domain-containing protein 1 (THSD1).